Reading from the N-terminus, the 39-residue chain is GGKEGYPLNSSNGCKSGRFAGTNSNENTECKGXDAENGY.

Positions 1 to 39 (GGKEGYPLNSSNGCKSGRFAGTNSNENTECKGXDAENGY) are disordered. Positions 3 to 39 (KEGYPLNSSNGCKSGRFAGTNSNENTECKGXDAENGY) constitute an LCN-type CS-alpha/beta domain. Over residues 28-39 (TECKGXDAENGY) the composition is skewed to basic and acidic residues.

It belongs to the long (4 C-C) scorpion toxin superfamily. Sodium channel inhibitor family. Beta subfamily. Expressed by the venom gland.

It localises to the secreted. Its function is as follows. Beta toxins bind voltage-independently at site-4 of sodium channels (Nav) and shift the voltage of activation toward more negative potentials thereby affecting sodium channel activation and promoting spontaneous and repetitive firing. The sequence is that of Putative beta-neurotoxin from Tityus pachyurus (Colombian scorpion).